A 481-amino-acid chain; its full sequence is DNA gyrase subunit B (481 aa).

The region spanning 323–442 is the Toprim domain; that stretch reads CELYLVEGDS…QGYVYIAQPP (120 aa). Positions 329, 407, and 409 each coordinate Mg(2+).

Belongs to the type II topoisomerase GyrB family. In terms of assembly, heterotetramer, composed of two GyrA and two GyrB chains. In the heterotetramer, GyrA contains the active site tyrosine that forms a transient covalent intermediate with DNA, while GyrB binds cofactors and catalyzes ATP hydrolysis. Mg(2+) is required as a cofactor. Requires Mn(2+) as cofactor. The cofactor is Ca(2+).

Its subcellular location is the cytoplasm. The catalysed reaction is ATP-dependent breakage, passage and rejoining of double-stranded DNA.. A type II topoisomerase that negatively supercoils closed circular double-stranded (ds) DNA in an ATP-dependent manner to modulate DNA topology and maintain chromosomes in an underwound state. Negative supercoiling favors strand separation, and DNA replication, transcription, recombination and repair, all of which involve strand separation. Also able to catalyze the interconversion of other topological isomers of dsDNA rings, including catenanes and knotted rings. Type II topoisomerases break and join 2 DNA strands simultaneously in an ATP-dependent manner. This chain is DNA gyrase subunit B (gyrB), found in Chitinophaga japonensis (Flexibacter japonensis).